The sequence spans 120 residues: Small ribosomal subunit protein uS19 (120 aa).

Belongs to the universal ribosomal protein uS19 family.

The protein is Small ribosomal subunit protein uS19 (RPS15) of Naegleria gruberi (Amoeba).